The following is a 241-amino-acid chain: Small ribosomal subunit protein uS2 (241 aa).

This sequence belongs to the universal ribosomal protein uS2 family.

The protein is Small ribosomal subunit protein uS2 of Pectobacterium carotovorum subsp. carotovorum (strain PC1).